The primary structure comprises 331 residues: Serine/threonine-protein phosphatase 6 catalytic subunit (331 aa).

Mn(2+) is bound by residues Asp-79, His-81, Asp-107, and Asn-139. Residue His-140 is the Proton donor of the active site. Residues His-189 and His-264 each contribute to the Mn(2+) site.

This sequence belongs to the PPP phosphatase family. PP-6 (PP-V) subfamily. As to quaternary structure, forms a complex composed of catalytic subunit pph-6 and regulatory subunit saps-1; the interaction increases pph-6 and saps-1 protein stability. Requires Mn(2+) as cofactor.

The protein localises to the cytoplasm. It localises to the cell cortex. The protein resides in the cytoskeleton. Its subcellular location is the spindle pole. The catalysed reaction is O-phospho-L-seryl-[protein] + H2O = L-seryl-[protein] + phosphate. The enzyme catalyses O-phospho-L-threonyl-[protein] + H2O = L-threonyl-[protein] + phosphate. Functionally, catalytic subunit of protein phosphatase 6 (PP6). In complex with saps-1, promotes actomyosin contractility during cytokinesis by regulating the organization of cortical non-muscle myosin II nmy-2 and thus contributing to correct spindle positioning. Also required for the proper generation of pulling forces on spindle poles during anaphase by regulating the cortical localization of gpr-1, gpr-2 and lin-5. This Caenorhabditis elegans protein is Serine/threonine-protein phosphatase 6 catalytic subunit.